We begin with the raw amino-acid sequence, 328 residues long: H-2 class I histocompatibility antigen, K-Q alpha chain (328 aa).

Residues 1–71 (PRFISVGYVD…LLRYYNQSAG (71 aa)) form an alpha-1 region. Over 1–265 (PRFISVGYVD…EPPPSAVSNT (265 aa)) the chain is Extracellular. N-linked (GlcNAc...) asparagine glycosylation is present at asparagine 67. The segment at 72–163 (GSHTIQRMYG…KNGNATLLRT (92 aa)) is alpha-2. Cysteine 82 and cysteine 145 are joined by a disulfide. N-linked (GlcNAc...) asparagine glycosylation occurs at asparagine 157. The segment at 164-255 (DSPKAHVTHH…GLPKPLTLRW (92 aa)) is alpha-3. An Ig-like C1-type domain is found at 166–252 (PKAHVTHHSR…YHQGLPKPLT (87 aa)). Cysteine 184 and cysteine 240 form a disulfide bridge. The connecting peptide stretch occupies residues 256 to 265 (EPPPSAVSNT). A helical membrane pass occupies residues 266-289 (VIIAVLVVLGAAIVTGAVVAFVMM). Over 290-328 (RRRNTGGKGGDYALAPGSQTSDLSLPDCKVMVHDPHSLA) the chain is Cytoplasmic. Phosphoserine is present on residues serine 310 and serine 313.

Belongs to the MHC class I family. In terms of assembly, heterodimer of an alpha chain and a beta chain (beta-2-microglobulin).

It localises to the membrane. In terms of biological role, involved in the presentation of foreign antigens to the immune system. This is H-2 class I histocompatibility antigen, K-Q alpha chain (H2-K1) from Mus musculus (Mouse).